A 364-amino-acid polypeptide reads, in one-letter code: DNA polymerase IV (364 aa).

In terms of domain architecture, UmuC spans 14 to 198 (IIHIDMDAFF…LPIEKFHGVG (185 aa)). Mg(2+) is bound by residues Asp-18 and Asp-116. Residue Glu-117 is part of the active site.

It belongs to the DNA polymerase type-Y family. As to quaternary structure, monomer. The cofactor is Mg(2+).

Its subcellular location is the cytoplasm. The enzyme catalyses DNA(n) + a 2'-deoxyribonucleoside 5'-triphosphate = DNA(n+1) + diphosphate. In terms of biological role, poorly processive, error-prone DNA polymerase involved in untargeted mutagenesis. Copies undamaged DNA at stalled replication forks, which arise in vivo from mismatched or misaligned primer ends. These misaligned primers can be extended by PolIV. Exhibits no 3'-5' exonuclease (proofreading) activity. May be involved in translesional synthesis, in conjunction with the beta clamp from PolIII. In Streptococcus agalactiae serotype Ia (strain ATCC 27591 / A909 / CDC SS700), this protein is DNA polymerase IV.